Here is a 232-residue protein sequence, read N- to C-terminus: Dehydrin DHN3 (232 aa).

A compositionally biased stretch (polar residues) spans 1 to 14 (MSQYQNQYGAQTGM). Disordered regions lie at residues 1-66 (MSQY…QHRG) and 140-232 (EHHG…CTGH). Gly residues predominate over residues 49 to 60 (TTGGATGQGHGH). Positions 140–157 (EHHGDKKGVMDKIKEKIP) are enriched in basic and acidic residues. Over residues 159 to 168 (TEQSRTNTDG) the composition is skewed to polar residues. The segment covering 198-223 (EQQDVHHGDEQHGEKKGIMEKIKEKL) has biased composition (basic and acidic residues).

It belongs to the plant dehydrin family.

The chain is Dehydrin DHN3 (DHN3) from Pisum sativum (Garden pea).